The chain runs to 525 residues: GMP synthase [glutamine-hydrolyzing] (525 aa).

A Glutamine amidotransferase type-1 domain is found at 16-205 (PVLVVDFGAQ…LHDFAGLGAD (190 aa)). Cys93 (nucleophile) is an active-site residue. Catalysis depends on residues His179 and Glu181. The GMPS ATP-PPase domain maps to 206–399 (WTAANIAGVL…LGLPEEIVAR (194 aa)). 233–239 (SGGVDSA) contacts ATP.

Homodimer.

It carries out the reaction XMP + L-glutamine + ATP + H2O = GMP + L-glutamate + AMP + diphosphate + 2 H(+). Its pathway is purine metabolism; GMP biosynthesis; GMP from XMP (L-Gln route): step 1/1. Catalyzes the synthesis of GMP from XMP. This chain is GMP synthase [glutamine-hydrolyzing], found in Mycolicibacterium paratuberculosis (strain ATCC BAA-968 / K-10) (Mycobacterium paratuberculosis).